Consider the following 202-residue polypeptide: Endoribonuclease YbeY (202 aa).

Residues His120, His124, and His130 each contribute to the Zn(2+) site.

This sequence belongs to the endoribonuclease YbeY family. Zn(2+) is required as a cofactor.

It localises to the cytoplasm. Single strand-specific metallo-endoribonuclease involved in late-stage 70S ribosome quality control and in maturation of the 3' terminus of the 16S rRNA. The protein is Endoribonuclease YbeY of Corynebacterium kroppenstedtii (strain DSM 44385 / JCM 11950 / CIP 105744 / CCUG 35717).